Consider the following 247-residue polypeptide: 2,3-bisphosphoglycerate-dependent phosphoglycerate mutase (247 aa).

Substrate is bound by residues 8–15 (RHGQSLWN), 21–22 (TG), Arg60, 87–90 (ERHY), Lys98, 114–115 (RR), and 183–184 (GN). Residue His9 is the Tele-phosphohistidine intermediate of the active site. The active-site Proton donor/acceptor is Glu87.

It belongs to the phosphoglycerate mutase family. BPG-dependent PGAM subfamily.

The catalysed reaction is (2R)-2-phosphoglycerate = (2R)-3-phosphoglycerate. Its pathway is carbohydrate degradation; glycolysis; pyruvate from D-glyceraldehyde 3-phosphate: step 3/5. In terms of biological role, catalyzes the interconversion of 2-phosphoglycerate and 3-phosphoglycerate. This is 2,3-bisphosphoglycerate-dependent phosphoglycerate mutase from Hydrogenobaculum sp. (strain Y04AAS1).